Reading from the N-terminus, the 143-residue chain is Transcriptional regulator MraZ (143 aa).

SpoVT-AbrB domains are found at residues 5-47 (TYTP…PRSE) and 76-119 (TDEQ…DAQA).

It belongs to the MraZ family. As to quaternary structure, forms oligomers.

It is found in the cytoplasm. Its subcellular location is the nucleoid. This is Transcriptional regulator MraZ from Mycobacterium ulcerans (strain Agy99).